Consider the following 389-residue polypeptide: Globin-like protein 6 (389 aa).

Residues 1 to 15 (MGNQSTKSTHGTTRV) are compositionally biased toward polar residues. Disordered stretches follow at residues 1-38 (MGNQ…RSAS), 96-123 (RTSK…SVDS), and 143-185 (TVSS…SSNP). Basic residues predominate over residues 16 to 25 (SHSKSAHHNS). The 152-residue stretch at 196–347 (HLTQPQILFV…VTEQLKEGFQ (152 aa)) folds into the Globin domain. Heme b contacts are provided by H254 and H286. The tract at residues 367 to 389 (SSFEISTKTKQSDMKRFHTLDNM) is disordered. The segment covering 376–389 (KQSDMKRFHTLDNM) has biased composition (basic and acidic residues).

It belongs to the globin family. Expressed in the head and tail neurons and nerve cord.

Functionally, may play a role as physiological sensor for oxygen via redox signaling and/or electron transport. The polypeptide is Globin-like protein 6 (Caenorhabditis elegans).